The primary structure comprises 107 residues: Cytochrome c-550 (107 aa).

Residues Cys-11, Cys-14, His-15, and Met-80 each coordinate heme c.

Post-translationally, binds 1 heme c group covalently per subunit.

This is Cytochrome c-550 from Ancylobacter novellus (Thiobacillus novellus).